The following is a 312-amino-acid chain: Aspartate carbamoyltransferase catalytic subunit (312 aa).

2 residues coordinate carbamoyl phosphate: Arg62 and Thr63. Lys90 serves as a coordination point for L-aspartate. 3 residues coordinate carbamoyl phosphate: Arg112, His140, and Gln143. Residues Arg173 and Arg228 each coordinate L-aspartate. Residues Gly269 and Pro270 each contribute to the carbamoyl phosphate site.

Belongs to the aspartate/ornithine carbamoyltransferase superfamily. ATCase family. As to quaternary structure, heterododecamer (2C3:3R2) of six catalytic PyrB chains organized as two trimers (C3), and six regulatory PyrI chains organized as three dimers (R2).

It carries out the reaction carbamoyl phosphate + L-aspartate = N-carbamoyl-L-aspartate + phosphate + H(+). It participates in pyrimidine metabolism; UMP biosynthesis via de novo pathway; (S)-dihydroorotate from bicarbonate: step 2/3. Its function is as follows. Catalyzes the condensation of carbamoyl phosphate and aspartate to form carbamoyl aspartate and inorganic phosphate, the committed step in the de novo pyrimidine nucleotide biosynthesis pathway. The chain is Aspartate carbamoyltransferase catalytic subunit from Deinococcus geothermalis (strain DSM 11300 / CIP 105573 / AG-3a).